The chain runs to 46 residues: Photosystem II reaction center protein K (46 aa).

Residues 1-9 (MLILLNTFA) constitute a propeptide that is removed on maturation. Residues 25–45 (LPLIPLFFFLLVFVWQAAVGF) traverse the membrane as a helical segment.

This sequence belongs to the PsbK family. In terms of assembly, PSII is composed of 1 copy each of membrane proteins PsbA, PsbB, PsbC, PsbD, PsbE, PsbF, PsbH, PsbI, PsbJ, PsbK, PsbL, PsbM, PsbT, PsbX, PsbY, Psb30/Ycf12, peripheral proteins PsbO, CyanoQ (PsbQ), PsbU, PsbV and a large number of cofactors. It forms dimeric complexes.

It is found in the cellular thylakoid membrane. Functionally, one of the components of the core complex of photosystem II (PSII). PSII is a light-driven water:plastoquinone oxidoreductase that uses light energy to abstract electrons from H(2)O, generating O(2) and a proton gradient subsequently used for ATP formation. It consists of a core antenna complex that captures photons, and an electron transfer chain that converts photonic excitation into a charge separation. In Prochlorococcus marinus (strain MIT 9215), this protein is Photosystem II reaction center protein K.